The chain runs to 92 residues: Putative protein IntG (92 aa).

It belongs to the 'phage' integrase family.

The sequence is that of Putative protein IntG (intG) from Escherichia coli (strain K12).